Reading from the N-terminus, the 117-residue chain is UPF0102 protein FTF0898c (117 aa).

Belongs to the UPF0102 family.

This chain is UPF0102 protein FTF0898c, found in Francisella tularensis subsp. tularensis (strain FSC 198).